Reading from the N-terminus, the 164-residue chain is MKGVKFMKEIILAGGCFWGVEEYFSRIYGVVDTKVGYVNGVTKNPSYEEVCNGNTGYAEGCYIKFDESIIGLKRILDKFWDIIDPTILNRQGPDVGHQYRTGIYYYDKEDLDDILKSKDEISKKYDKPIVTEVEKVTYFYLAEEYHQKYLKKNPNGYCHINLDN.

The active site involves Cys-16.

Belongs to the MsrA Met sulfoxide reductase family.

The enzyme catalyses L-methionyl-[protein] + [thioredoxin]-disulfide + H2O = L-methionyl-(S)-S-oxide-[protein] + [thioredoxin]-dithiol. It carries out the reaction [thioredoxin]-disulfide + L-methionine + H2O = L-methionine (S)-S-oxide + [thioredoxin]-dithiol. Has an important function as a repair enzyme for proteins that have been inactivated by oxidation. Catalyzes the reversible oxidation-reduction of methionine sulfoxide in proteins to methionine. This is Peptide methionine sulfoxide reductase MsrA from Clostridium tetani (strain Massachusetts / E88).